The following is a 398-amino-acid chain: Deoxyguanosinetriphosphate triphosphohydrolase-like protein (398 aa).

In terms of domain architecture, HD spans 68 to 215 (RLTHTLEVAQ…AAISDDIAYD (148 aa)).

It belongs to the dGTPase family. Type 2 subfamily.

This chain is Deoxyguanosinetriphosphate triphosphohydrolase-like protein, found in Azorhizobium caulinodans (strain ATCC 43989 / DSM 5975 / JCM 20966 / LMG 6465 / NBRC 14845 / NCIMB 13405 / ORS 571).